A 350-amino-acid polypeptide reads, in one-letter code: S-adenosylmethionine:tRNA ribosyltransferase-isomerase (350 aa).

The protein belongs to the QueA family. As to quaternary structure, monomer.

It localises to the cytoplasm. The catalysed reaction is 7-aminomethyl-7-carbaguanosine(34) in tRNA + S-adenosyl-L-methionine = epoxyqueuosine(34) in tRNA + adenine + L-methionine + 2 H(+). It participates in tRNA modification; tRNA-queuosine biosynthesis. Its function is as follows. Transfers and isomerizes the ribose moiety from AdoMet to the 7-aminomethyl group of 7-deazaguanine (preQ1-tRNA) to give epoxyqueuosine (oQ-tRNA). The sequence is that of S-adenosylmethionine:tRNA ribosyltransferase-isomerase from Bacillus mycoides (strain KBAB4) (Bacillus weihenstephanensis).